The chain runs to 291 residues: 3-hydroxy-5-phosphonooxypentane-2,4-dione thiolase (291 aa).

Catalysis depends on Lys-203, which acts as the Schiff-base intermediate with substrate.

This sequence belongs to the DeoC/FbaB aldolase family. As to quaternary structure, homodecamer.

The protein resides in the cytoplasm. It carries out the reaction dihydroxyacetone phosphate + acetyl-CoA = 3-hydroxy-2,4-dioxopentyl phosphate + CoA. Its function is as follows. Involved in the degradation of phospho-AI-2, thereby terminating induction of the lsr operon and closing the AI-2 signaling cycle. Catalyzes the transfer of an acetyl moiety from 3-hydroxy-5-phosphonooxypentane-2,4-dione to CoA to form glycerone phosphate and acetyl-CoA. The polypeptide is 3-hydroxy-5-phosphonooxypentane-2,4-dione thiolase (Escherichia coli (strain K12 / DH10B)).